Reading from the N-terminus, the 420-residue chain is Small ribosomal subunit protein mS75 (420 aa).

Residues 1-11 (MYNLSRIIYRF) constitute a mitochondrion transit peptide. Disordered stretches follow at residues 99-120 (RQKN…DVMS) and 390-420 (RYSP…GKQT). Positions 102–114 (NAANPSSDNTPSD) are enriched in polar residues. Over residues 396–409 (QKRRSKRKQKRKER) the composition is skewed to basic residues.

As to quaternary structure, component of the mitochondrial ribosome small subunit. As to expression, expressed at high levels in reproductive organs and, at lower levels, ubiquitously.

It localises to the mitochondrion. In terms of biological role, essential for fertility (male and female gametophyte functions and development). Required for the integrity of female gametic mitochondria. Modulates male gametophyte functions, including pollen tube growth and style penetration. Involved in mitochondrial-driven cell-to-cell communication in embryo sacs during female gametes maturation (including embryogenesis initiation and endosperm development), especially for reciprocal signaling between central and egg cells which regulates reciprocal development. The polypeptide is Small ribosomal subunit protein mS75 (Arabidopsis thaliana (Mouse-ear cress)).